The chain runs to 305 residues: Nuclear egress protein 1 (305 aa).

Over residues 1–11 the composition is skewed to basic and acidic residues; sequence MDRERPRKTRE. The interval 1-24 is disordered; sequence MDRERPRKTREPASPGSVLSKRSK. Residues 104-230 form a CCCH-type zinc finger; sequence CLVLSPLGHA…FALFKTDDLH (127 aa).

It belongs to the herpesviridae NEC1 protein family. In terms of assembly, forms a heterohexameric complex with NEC2. Interacts with capsid vertex specific component 2/CVC2; this interaction directs the capsid to the host inner nuclear membrane to initiate budding. Phosphorylated at serine residues in the N-terminus. This phosphorylation regulates the localization within the inner nuclear membrane.

The protein resides in the host nucleus inner membrane. In terms of biological role, plays an essential role in virion nuclear egress, the first step of virion release from infected cell. Within the host nucleus, NEC1 interacts with the newly formed capsid through the vertexes and directs it to the inner nuclear membrane by associating with NEC2. Induces the budding of the capsid at the inner nuclear membrane as well as its envelopment into the perinuclear space. There, the NEC1/NEC2 complex promotes the fusion of the enveloped capsid with the outer nuclear membrane and the subsequent release of the viral capsid into the cytoplasm where it will reach the secondary budding sites in the host Golgi or trans-Golgi network. The polypeptide is Nuclear egress protein 1 (Equus caballus (Horse)).